Reading from the N-terminus, the 127-residue chain is Ribonuclease P protein component (127 aa).

Positions 99 to 127 (ALSASLRQQLRDGIDRSARRQEPAAERQR) are disordered. The span at 107–127 (QLRDGIDRSARRQEPAAERQR) shows a compositional bias: basic and acidic residues.

This sequence belongs to the RnpA family. In terms of assembly, consists of a catalytic RNA component (M1 or rnpB) and a protein subunit.

The catalysed reaction is Endonucleolytic cleavage of RNA, removing 5'-extranucleotides from tRNA precursor.. RNaseP catalyzes the removal of the 5'-leader sequence from pre-tRNA to produce the mature 5'-terminus. It can also cleave other RNA substrates such as 4.5S RNA. The protein component plays an auxiliary but essential role in vivo by binding to the 5'-leader sequence and broadening the substrate specificity of the ribozyme. The protein is Ribonuclease P protein component of Mycobacteroides abscessus (strain ATCC 19977 / DSM 44196 / CCUG 20993 / CIP 104536 / JCM 13569 / NCTC 13031 / TMC 1543 / L948) (Mycobacterium abscessus).